The primary structure comprises 656 residues: DNA mismatch repair protein MutL (656 aa).

Belongs to the DNA mismatch repair MutL/HexB family.

Functionally, this protein is involved in the repair of mismatches in DNA. It is required for dam-dependent methyl-directed DNA mismatch repair. May act as a 'molecular matchmaker', a protein that promotes the formation of a stable complex between two or more DNA-binding proteins in an ATP-dependent manner without itself being part of a final effector complex. The sequence is that of DNA mismatch repair protein MutL from Lactococcus lactis subsp. lactis (strain IL1403) (Streptococcus lactis).